The primary structure comprises 585 residues: Probable inactive serine/threonine-protein kinase slob1 (585 aa).

The FYVE-type zinc-finger motif lies at 21-82 (DQSSLECNDC…LCRSCNNSFE (62 aa)). Positions 27, 30, 43, 46, 51, 54, 74, and 77 each coordinate Zn(2+). A Protein kinase domain is found at 108-478 (SKPLQDIGHT…STSLLNNSFN (371 aa)). 2 stretches are compositionally biased toward low complexity: residues 426–456 (ISKL…NISS) and 466–503 (LPSS…ISSP). Positions 426–585 (ISKLSSSSSN…SLKPSSTKKK (160 aa)) are disordered. Pro residues predominate over residues 513-532 (TPPPPPPPPKSAPPPPPPPS). Positions 533 to 542 (SSKLPPSSSS) are enriched in low complexity. The WH2 domain maps to 542 to 562 (SRNSLLESIRNADNAKKLKKT).

This sequence belongs to the protein kinase superfamily. Ser/Thr protein kinase family.

The sequence is that of Probable inactive serine/threonine-protein kinase slob1 (slob1) from Dictyostelium discoideum (Social amoeba).